We begin with the raw amino-acid sequence, 86 residues long: Small ribosomal subunit protein bS20 (86 aa).

The protein belongs to the bacterial ribosomal protein bS20 family.

Binds directly to 16S ribosomal RNA. The polypeptide is Small ribosomal subunit protein bS20 (Rhodococcus erythropolis (strain PR4 / NBRC 100887)).